Consider the following 52-residue polypeptide: uncharacterized protein (52 aa).

A helical membrane pass occupies residues 21–40 (VAMNSYVELLFLSVPLIHIF).

The protein localises to the cell membrane. This is an uncharacterized protein from Bacillus subtilis (strain 168).